Here is a 60-residue protein sequence, read N- to C-terminus: Sperm protamine P1 (60 aa).

The segment at 1-60 (MARYRHSRSRSRSRYRRRRRRRSRYRSQRRRYRGRRRRRSRRGRRRGYSRRRYSRRRRRY) is disordered.

It belongs to the protamine P1 family. In terms of tissue distribution, testis.

It localises to the nucleus. The protein localises to the chromosome. Its function is as follows. Protamines substitute for histones in the chromatin of sperm during the haploid phase of spermatogenesis. They compact sperm DNA into a highly condensed, stable and inactive complex. The polypeptide is Sperm protamine P1 (PRM1) (Osphranter rufus (Red kangaroo)).